A 261-amino-acid chain; its full sequence is Ribonuclease HII (261 aa).

Residues 71–259 (QYIAGVDEVG…VKEAKLHFES (189 aa)) form the RNase H type-2 domain. 3 residues coordinate a divalent metal cation: D77, E78, and D169.

Belongs to the RNase HII family. Mn(2+) is required as a cofactor. Mg(2+) serves as cofactor.

It is found in the cytoplasm. The enzyme catalyses Endonucleolytic cleavage to 5'-phosphomonoester.. Endonuclease that specifically degrades the RNA of RNA-DNA hybrids. This chain is Ribonuclease HII, found in Listeria innocua serovar 6a (strain ATCC BAA-680 / CLIP 11262).